Here is a 151-residue protein sequence, read N- to C-terminus: Deoxyuridine 5'-triphosphate nucleotidohydrolase (151 aa).

Residues 70-72 (RSG), N83, 87-89 (LID), and M97 contribute to the substrate site.

It belongs to the dUTPase family. As to quaternary structure, homotrimer. It depends on Mg(2+) as a cofactor.

The catalysed reaction is dUTP + H2O = dUMP + diphosphate + H(+). The protein operates within pyrimidine metabolism; dUMP biosynthesis; dUMP from dCTP (dUTP route): step 2/2. Functionally, this enzyme is involved in nucleotide metabolism: it produces dUMP, the immediate precursor of thymidine nucleotides and it decreases the intracellular concentration of dUTP so that uracil cannot be incorporated into DNA. This is Deoxyuridine 5'-triphosphate nucleotidohydrolase from Escherichia coli O45:K1 (strain S88 / ExPEC).